The sequence spans 554 residues: HMG box-containing protein 4 (554 aa).

Disordered stretches follow at residues 15-368 and 417-469; these read GTED…AYQV and HKQN…PAKV. Over residues 75–88 the composition is skewed to basic and acidic residues; that stretch reads SSDDYHADHSTDSA. The segment covering 95–105 has biased composition (low complexity); the sequence is SLPSPSSSDTA. A compositionally biased stretch (polar residues) spans 113–123; sequence TSPQADTSTTH. Composition is skewed to basic and acidic residues over residues 145-154 and 217-226; these read PHKDYHKKSG and LGREEIESRS. The span at 236–251 shows a compositional bias: polar residues; the sequence is YTPRSGGTPDSASSTG. Positions 268 to 296 are enriched in basic residues; the sequence is MKKKKKSKKSKKKKDKHKDEKHKKHSKSK. The span at 313–332 shows a compositional bias: pro residues; that stretch reads LPSPPPPPATTPPTSPPSIP. The span at 341–357 shows a compositional bias: basic and acidic residues; the sequence is HTEEQSDKKKKKEDPEK. Positions 359-427 form a DNA-binding region, HMG box; the sequence is KKKNMSAYQV…KQNKAEATTV (69 aa). Low complexity-rich tracts occupy residues 433-445 and 454-467; these read SSESAPKSKGSSS and SPTSSVASFSTSPA.

Interacts with nlk.2.

It is found in the nucleus. In terms of biological role, negatively regulates Wnt/beta-catenin signaling during development. In Xenopus laevis (African clawed frog), this protein is HMG box-containing protein 4 (hmgxb4).